The chain runs to 115 residues: Beta-2-microglobulin (115 aa).

An N-terminal signal peptide occupies residues 1 to 16 (MKIALVLLSLLALTLA). In terms of domain architecture, Ig-like C1-type spans 22–113 (PPVVKVYTAE…GNPSKKYRLD (92 aa)).

It belongs to the beta-2-microglobulin family. In terms of assembly, heterodimer of an alpha chain and a beta chain. Beta-2-microglobulin is the beta-chain of major histocompatibility complex class I molecules.

The protein resides in the secreted. Functionally, component of the class I major histocompatibility complex (MHC). Involved in the presentation of peptide antigens to the immune system. In Xenopus laevis (African clawed frog), this protein is Beta-2-microglobulin (b2m).